Here is a 525-residue protein sequence, read N- to C-terminus: GMP synthase [glutamine-hydrolyzing] (525 aa).

The Glutamine amidotransferase type-1 domain maps to 9-207 (RILILDFGSQ…VQDICGCEAL (199 aa)). The active-site Nucleophile is Cys-86. Catalysis depends on residues His-181 and Glu-183. Residues 208 to 400 (WTPSNIVEDA…LGLPYDMVYR (193 aa)) form the GMPS ATP-PPase domain. Residue 235 to 241 (SGGVDSS) coordinates ATP.

As to quaternary structure, homodimer.

It carries out the reaction XMP + L-glutamine + ATP + H2O = GMP + L-glutamate + AMP + diphosphate + 2 H(+). The protein operates within purine metabolism; GMP biosynthesis; GMP from XMP (L-Gln route): step 1/1. Functionally, catalyzes the synthesis of GMP from XMP. This is GMP synthase [glutamine-hydrolyzing] from Pseudomonas putida (strain W619).